The following is a 154-amino-acid chain: Interleukin-2 (154 aa).

The N-terminal stretch at M1–S20 is a signal peptide. The O-linked (GalNAc...) threonine glycan is linked to T23. An intrachain disulfide couples C78 to C126.

It belongs to the IL-2 family.

It localises to the secreted. Functionally, cytokine produced by activated CD4-positive helper T-cells and to a lesser extend activated CD8-positive T-cells and natural killer (NK) cells that plays pivotal roles in the immune response and tolerance. Binds to a receptor complex composed of either the high-affinity trimeric IL-2R (IL2RA/CD25, IL2RB/CD122 and IL2RG/CD132) or the low-affinity dimeric IL-2R (IL2RB and IL2RG). Interaction with the receptor leads to oligomerization and conformation changes in the IL-2R subunits resulting in downstream signaling starting with phosphorylation of JAK1 and JAK3. In turn, JAK1 and JAK3 phosphorylate the receptor to form a docking site leading to the phosphorylation of several substrates including STAT5. This process leads to activation of several pathways including STAT, phosphoinositide-3-kinase/PI3K and mitogen-activated protein kinase/MAPK pathways. Functions as a T-cell growth factor and can increase NK-cell cytolytic activity as well. Promotes strong proliferation of activated B-cells and subsequently immunoglobulin production. Plays a pivotal role in regulating the adaptive immune system by controlling the survival and proliferation of regulatory T-cells, which are required for the maintenance of immune tolerance. Moreover, participates in the differentiation and homeostasis of effector T-cell subsets, including Th1, Th2, Th17 as well as memory CD8-positive T-cells. The chain is Interleukin-2 (IL2) from Cercocebus atys (Sooty mangabey).